The chain runs to 619 residues: Dihydroxy-acid dehydratase (619 aa).

D81 provides a ligand contact to Mg(2+). Residue C122 coordinates [2Fe-2S] cluster. Mg(2+) contacts are provided by D123 and K124. K124 bears the N6-carboxylysine mark. C201 provides a ligand contact to [2Fe-2S] cluster. E496 contributes to the Mg(2+) binding site. S522 (proton acceptor) is an active-site residue.

It belongs to the IlvD/Edd family. As to quaternary structure, homodimer. [2Fe-2S] cluster is required as a cofactor. Requires Mg(2+) as cofactor.

The catalysed reaction is (2R)-2,3-dihydroxy-3-methylbutanoate = 3-methyl-2-oxobutanoate + H2O. It carries out the reaction (2R,3R)-2,3-dihydroxy-3-methylpentanoate = (S)-3-methyl-2-oxopentanoate + H2O. The protein operates within amino-acid biosynthesis; L-isoleucine biosynthesis; L-isoleucine from 2-oxobutanoate: step 3/4. Its pathway is amino-acid biosynthesis; L-valine biosynthesis; L-valine from pyruvate: step 3/4. Functions in the biosynthesis of branched-chain amino acids. Catalyzes the dehydration of (2R,3R)-2,3-dihydroxy-3-methylpentanoate (2,3-dihydroxy-3-methylvalerate) into 2-oxo-3-methylpentanoate (2-oxo-3-methylvalerate) and of (2R)-2,3-dihydroxy-3-methylbutanoate (2,3-dihydroxyisovalerate) into 2-oxo-3-methylbutanoate (2-oxoisovalerate), the penultimate precursor to L-isoleucine and L-valine, respectively. This chain is Dihydroxy-acid dehydratase, found in Paracidovorax citrulli (strain AAC00-1) (Acidovorax citrulli).